Consider the following 300-residue polypeptide: Protoheme IX farnesyltransferase (300 aa).

The next 9 helical transmembrane spans lie at 20 to 40 (ITKA…YLLG), 49 to 69 (WSVL…SNAY), 97 to 117 (VTAL…LYTI), 122 to 142 (AMFA…LKTV), 145 to 165 (LSVF…WVAA), 176 to 196 (LFLI…WFLY), 217 to 237 (ALQV…PVLG), 242 to 262 (LFIS…MLFY), and 278 to 298 (LMLV…VDKF).

This sequence belongs to the UbiA prenyltransferase family. Protoheme IX farnesyltransferase subfamily.

Its subcellular location is the cell inner membrane. The catalysed reaction is heme b + (2E,6E)-farnesyl diphosphate + H2O = Fe(II)-heme o + diphosphate. Its pathway is porphyrin-containing compound metabolism; heme O biosynthesis; heme O from protoheme: step 1/1. Its function is as follows. Converts heme B (protoheme IX) to heme O by substitution of the vinyl group on carbon 2 of heme B porphyrin ring with a hydroxyethyl farnesyl side group. The protein is Protoheme IX farnesyltransferase of Flavobacterium johnsoniae (strain ATCC 17061 / DSM 2064 / JCM 8514 / BCRC 14874 / CCUG 350202 / NBRC 14942 / NCIMB 11054 / UW101) (Cytophaga johnsonae).